A 273-amino-acid chain; its full sequence is Progestin and adipoQ receptor family member 4 (273 aa).

6 consecutive transmembrane segments (helical) span residues 52 to 72 (IYTH…TMPW), 79 to 99 (GWLG…SVLY), 115 to 135 (LLAL…LPII), 147 to 167 (PAAL…ALTA), 185 to 205 (LLVF…SLPC), and 245 to 265 (LLSV…LLWA).

Belongs to the ADIPOR family. As to quaternary structure, interacts with CERS2 and CERS5; the interaction regulates CERS2 and CERS5 stabilities and activities and is inhibited in presence of ceramides. As to expression, relatively widely expressed in a range of tissues. Expressed in subcutaneous white adipose tissue.

It localises to the golgi apparatus membrane. Plays a role in maintaining adipose tissue function through the regulation of ceramide levels. Mediates the stability of ceramide synthetases, CERS2 and CERS5, and their activities. The sequence is that of Progestin and adipoQ receptor family member 4 from Homo sapiens (Human).